The chain runs to 306 residues: Putative B3 domain-containing protein Os03g0621600 (306 aa).

The segment at residues 29–122 (FSVLCLMPIM…QLKTLIFDSS (94 aa)) is a DNA-binding region (TF-B3 1). Residues 139 to 166 (YDIAMRNSQDEKKKRKQRDISRQGTVKP) are disordered. Residues 210–306 (GYVMNNSSIH…VMDVHIIRRK (97 aa)) constitute a DNA-binding region (TF-B3 2).

It is found in the nucleus. This is Putative B3 domain-containing protein Os03g0621600 from Oryza sativa subsp. japonica (Rice).